We begin with the raw amino-acid sequence, 199 residues long: NAD(P)H dehydrogenase (quinone) (199 aa).

Residues 4-190 (VLVLYYSAYG…NGARYQGRTI (187 aa)) enclose the Flavodoxin-like domain. FMN is bound by residues 10 to 15 (SAYGHI) and 78 to 80 (TRF). NAD(+) is bound at residue tyrosine 12. Tryptophan 98 is a binding site for substrate. Residues 113 to 119 (STATQHG) and histidine 134 contribute to the FMN site.

Belongs to the WrbA family. The cofactor is FMN.

It carries out the reaction a quinone + NADH + H(+) = a quinol + NAD(+). It catalyses the reaction a quinone + NADPH + H(+) = a quinol + NADP(+). This Afipia carboxidovorans (strain ATCC 49405 / DSM 1227 / KCTC 32145 / OM5) (Oligotropha carboxidovorans) protein is NAD(P)H dehydrogenase (quinone).